Reading from the N-terminus, the 224-residue chain is Peptidyl-prolyl cis-trans isomerase FKBP3 (224 aa).

Alanine 2 bears the N-acetylalanine mark. A Phosphoserine modification is found at serine 36. Positions 89-102 (KLNEDKPKETKSEE) are enriched in basic and acidic residues. Residues 89 to 111 (KLNEDKPKETKSEETLDEGPPKY) form a disordered region. Lysine 99 is subject to N6-acetyllysine. A PPIase FKBP-type domain is found at 128-224 (GDVVHCWYTG…TFEVELVDID (97 aa)). Residue serine 152 is modified to Phosphoserine. The residue at position 170 (lysine 170) is an N6-acetyllysine.

It belongs to the FKBP-type PPIase family.

It is found in the nucleus. It carries out the reaction [protein]-peptidylproline (omega=180) = [protein]-peptidylproline (omega=0). With respect to regulation, inhibited preferentially by rapamycin over FK506. FK506- and rapamycin-binding proteins (FKBPs) constitute a family of receptors for the two immunosuppressants which inhibit T-cell proliferation by arresting two distinct cytoplasmic signal transmission pathways. PPIases accelerate the folding of proteins. The polypeptide is Peptidyl-prolyl cis-trans isomerase FKBP3 (FKBP3) (Homo sapiens (Human)).